Consider the following 434-residue polypeptide: Glutamyl-tRNA reductase (434 aa).

Substrate-binding positions include Thr-49–Arg-52, Ser-107, Glu-112–Gln-114, and Gln-118. Cys-50 acts as the Nucleophile in catalysis. Position 187-192 (Gly-187–Val-192) interacts with NADP(+).

Belongs to the glutamyl-tRNA reductase family. As to quaternary structure, homodimer.

The catalysed reaction is (S)-4-amino-5-oxopentanoate + tRNA(Glu) + NADP(+) = L-glutamyl-tRNA(Glu) + NADPH + H(+). It functions in the pathway porphyrin-containing compound metabolism; protoporphyrin-IX biosynthesis; 5-aminolevulinate from L-glutamyl-tRNA(Glu): step 1/2. Its function is as follows. Catalyzes the NADPH-dependent reduction of glutamyl-tRNA(Glu) to glutamate 1-semialdehyde (GSA). In Hydrogenovibrio crunogenus (strain DSM 25203 / XCL-2) (Thiomicrospira crunogena), this protein is Glutamyl-tRNA reductase.